A 441-amino-acid chain; its full sequence is Malate dehydrogenase [NADP], chloroplastic (441 aa).

A chloroplast-targeting transit peptide spans 1-51 (MAVAELSPSYKTQLKTCQQLSSSLSTRLSDHRKFSLRLLPRPVSVRGGIRC). Cys75 and Cys80 are disulfide-bonded. 104-110 (GAAGMIS) provides a ligand contact to NADP(+). Residues Arg185 and Arg191 each coordinate substrate. Residue Asn198 participates in NADP(+) binding. Gln205 contacts NAD(+). Residue 222–224 (VGN) participates in NADP(+) binding. Substrate contacts are provided by Asn224 and Arg255. The active-site Proton acceptor is His280. Cys416 and Cys428 form a disulfide bridge.

The protein belongs to the LDH/MDH superfamily. MDH type 2 family. As to quaternary structure, homodimer.

It localises to the plastid. The protein resides in the chloroplast. The catalysed reaction is (S)-malate + NADP(+) = oxaloacetate + NADPH + H(+). With respect to regulation, chloroplast NADP-MDH is activated upon illumination. In order to be enzymatically active, disulfide bridges on the protein must be reduced by thioredoxin which receives electrons from ferredoxin and the electron transport system of photosynthesis. The chloroplastic, NADP-dependent form is essential for the photosynthesis C4 cycle, which allows plants to circumvent the problem of photorespiration. In C4 plants, NADP-MDH activity acts to convert oxaloacetate to malate in chloroplasts of mesophyll cells for transport to the bundle sheath cells. The protein is Malate dehydrogenase [NADP], chloroplastic (MDH1) of Mesembryanthemum crystallinum (Common ice plant).